The chain runs to 243 residues: Adenosine 5'-phosphosulfate reductase (243 aa).

Positions 126, 127, 209, and 212 each coordinate [4Fe-4S] cluster. The Nucleophile; cysteine thiosulfonate intermediate role is filled by Cys235.

Belongs to the PAPS reductase family. CysH subfamily. [4Fe-4S] cluster is required as a cofactor.

It localises to the cytoplasm. The catalysed reaction is [thioredoxin]-disulfide + sulfite + AMP + 2 H(+) = adenosine 5'-phosphosulfate + [thioredoxin]-dithiol. The protein operates within sulfur metabolism; hydrogen sulfide biosynthesis; sulfite from sulfate. In terms of biological role, catalyzes the formation of sulfite from adenosine 5'-phosphosulfate (APS) using thioredoxin as an electron donor. This chain is Adenosine 5'-phosphosulfate reductase, found in Staphylococcus epidermidis (strain ATCC 35984 / DSM 28319 / BCRC 17069 / CCUG 31568 / BM 3577 / RP62A).